Reading from the N-terminus, the 211-residue chain is MSNGPLRVGIGGPVGAGKTTLTEQIARALAPRLSMAVITNDIYTREDAEALMRAQVLPSERIRGVETGGCPHTAIREDASINLAAIAELNAAFPDLDLVLIESGGDNLAATFSPELADLTIYVIDTAAGQDIPRKRGPGLARSDLLVVNKTDLAPHVGVDAALLEADARASRAGRPVVMAALRHGKGVAEVVDFLIEQGGLQPCPAHSHGQ.

Position 12–19 (12–19 (GPVGAGKT)) interacts with GTP.

Belongs to the SIMIBI class G3E GTPase family. UreG subfamily. Homodimer. UreD, UreF and UreG form a complex that acts as a GTP-hydrolysis-dependent molecular chaperone, activating the urease apoprotein by helping to assemble the nickel containing metallocenter of UreC. The UreE protein probably delivers the nickel.

It localises to the cytoplasm. Facilitates the functional incorporation of the urease nickel metallocenter. This process requires GTP hydrolysis, probably effectuated by UreG. The sequence is that of Urease accessory protein UreG from Paracoccus denitrificans (strain Pd 1222).